The chain runs to 103 residues: Histone H4 (103 aa).

Residues 1–14 (MTGRGKGGKGLGKG) are compositionally biased toward gly residues. Positions 1–20 (MTGRGKGGKGLGKGGAKRHR) are disordered. N6-acetyl-N6-methyllysine; alternate is present on residues K6 and K13. Residues 17–21 (KRHRK) mediate DNA binding.

The protein belongs to the histone H4 family. As to quaternary structure, the nucleosome is a histone octamer containing two molecules each of H2A, H2B, H3 and H4 assembled in one H3-H4 heterotetramer and two H2A-H2B heterodimers. The octamer wraps approximately 147 bp of DNA.

It localises to the nucleus. The protein resides in the chromosome. In terms of biological role, core component of nucleosome. Nucleosomes wrap and compact DNA into chromatin, limiting DNA accessibility to the cellular machineries which require DNA as a template. Histones thereby play a central role in transcription regulation, DNA repair, DNA replication and chromosomal stability. DNA accessibility is regulated via a complex set of post-translational modifications of histones, also called histone code, and nucleosome remodeling. This is Histone H4 (His4) from Myrmica ruginodis (Red ant).